Here is a 108-residue protein sequence, read N- to C-terminus: Histone H4 (108 aa).

The interval 1 to 24 (MTGRGKGGKVLSLGGKGGKGAKRH) is disordered. A DNA-binding region spans residues 17–21 (GGKGA).

Belongs to the histone H4 family. The nucleosome is a histone octamer containing two molecules each of H2A, H2B, H3 and H4 assembled in one H3-H4 heterotetramer and two H2A-H2B heterodimers. The octamer wraps approximately 147 bp of DNA.

It is found in the nucleus. The protein localises to the chromosome. Its function is as follows. Core component of nucleosome. Nucleosomes wrap and compact DNA into chromatin, limiting DNA accessibility to the cellular machineries which require DNA as a template. Histones thereby play a central role in transcription regulation, DNA repair, DNA replication and chromosomal stability. DNA accessibility is regulated via a complex set of post-translational modifications of histones, also called histone code, and nucleosome remodeling. The polypeptide is Histone H4 (Mastigamoeba balamuthi (Phreatamoeba balamuthi)).